A 437-amino-acid chain; its full sequence is Phenylacetate-coenzyme A ligase (437 aa).

Belongs to the phenylacetyl-CoA ligase family. In terms of assembly, monomer.

The enzyme catalyses 2-phenylacetate + ATP + CoA = phenylacetyl-CoA + AMP + diphosphate. It functions in the pathway aromatic compound metabolism; phenylacetate degradation. In terms of biological role, catalyzes the activation of phenylacetic acid (PA) to phenylacetyl-CoA (PA-CoA). This chain is Phenylacetate-coenzyme A ligase (paaK), found in Escherichia coli (strain K12).